Consider the following 459-residue polypeptide: ATP synthase subunit beta (459 aa).

Position 148–155 (148–155) interacts with ATP; sequence GGAGVGKT.

Belongs to the ATPase alpha/beta chains family. As to quaternary structure, F-type ATPases have 2 components, CF(1) - the catalytic core - and CF(0) - the membrane proton channel. CF(1) has five subunits: alpha(3), beta(3), gamma(1), delta(1), epsilon(1). CF(0) has three main subunits: a(1), b(2) and c(9-12). The alpha and beta chains form an alternating ring which encloses part of the gamma chain. CF(1) is attached to CF(0) by a central stalk formed by the gamma and epsilon chains, while a peripheral stalk is formed by the delta and b chains.

It is found in the cell inner membrane. The enzyme catalyses ATP + H2O + 4 H(+)(in) = ADP + phosphate + 5 H(+)(out). Produces ATP from ADP in the presence of a proton gradient across the membrane. The catalytic sites are hosted primarily by the beta subunits. This chain is ATP synthase subunit beta, found in Thiobacillus denitrificans (strain ATCC 25259 / T1).